The sequence spans 385 residues: A-type ATP synthase subunit C (385 aa).

This sequence belongs to the V-ATPase V0D/AC39 subunit family. As to quaternary structure, has multiple subunits with at least A(3), B(3), C, D, E, F, H, I and proteolipid K(x).

The protein localises to the cell membrane. In terms of biological role, component of the A-type ATP synthase that produces ATP from ADP in the presence of a proton gradient across the membrane. The chain is A-type ATP synthase subunit C from Methanosphaera stadtmanae (strain ATCC 43021 / DSM 3091 / JCM 11832 / MCB-3).